Consider the following 390-residue polypeptide: Pyruvate dehydrogenase E1 component subunit alpha, somatic form, mitochondrial (390 aa).

The N-terminal 29 residues, 1–29, are a transit peptide targeting the mitochondrion; that stretch reads MRKMLAAVSRVLSGVAQKPASRVLVASRH. Position 63 is an N6-acetyllysine; alternate (Lys63). N6-succinyllysine; alternate is present on Lys63. Pyruvate is bound by residues His92, Tyr118, Arg119, Ala157, Gly165, Val167, Asp196, Gly197, Ala198, Asn225, and Tyr227. The thiamine diphosphate site is built by Tyr118 and Arg119. 6 residues coordinate thiamine diphosphate: Gly165, Val167, Asp196, Gly197, Ala198, and Asn225. Asp196 is a Mg(2+) binding site. Residues Asn225 and Tyr227 each contribute to the Mg(2+) site. Ser232 is subject to Phosphoserine; by PDK1. Lys244 carries the N6-acetyllysine; alternate modification. Lys244 is subject to N6-succinyllysine; alternate. Position 267 is an N6-acetyllysine (Lys267). Lys277 carries the post-translational modification N6-succinyllysine. A thiamine diphosphate-binding site is contributed by His292. A Phosphoserine; by PDK1, PDK2, PDK3 and PDK4 modification is found at Ser293. A Phosphoserine modification is found at Ser295. Position 300 is a phosphoserine; by PDK1, PDK2, PDK3 and PDK4 (Ser300). Tyr301 is subject to Phosphotyrosine. At Lys313 the chain carries N6-acetyllysine; alternate. Residue Lys313 is modified to N6-succinyllysine; alternate. Lys321 and Lys336 each carry N6-acetyllysine. Lys385 is modified (N6-succinyllysine).

As to quaternary structure, heterotetramer of two PDHA1 and two PDHB subunits. The heterotetramer interacts with DLAT, and is part of the multimeric pyruvate dehydrogenase complex that contains multiple copies of pyruvate dehydrogenase (E1), dihydrolipoamide acetyltransferase (DLAT, E2) and lipoamide dehydrogenase (DLD, E3). These subunits are bound to an inner core composed of about 48 DLAT and 12 PDHX molecules. Thiamine diphosphate is required as a cofactor. The cofactor is Mg(2+). Post-translationally, phosphorylation at Ser-232, Ser-293 and Ser-300 by PDK family kinases inactivates the enzyme; for this phosphorylation at a single site is sufficient. Phosphorylation at Ser-293 interferes with access to active site, and thereby inactivates the enzyme. Dephosphorylation at all three sites, i.e. at Ser-232, Ser-293 and Ser-300, is required for reactivation. In terms of processing, acetylation alters the phosphorylation pattern. Deacetylated by SIRT3.

It localises to the mitochondrion matrix. It catalyses the reaction N(6)-[(R)-lipoyl]-L-lysyl-[protein] + pyruvate + H(+) = N(6)-[(R)-S(8)-acetyldihydrolipoyl]-L-lysyl-[protein] + CO2. Its activity is regulated as follows. Pyruvate dehydrogenase activity is inhibited by phosphorylation of PDHA1; it is reactivated by dephosphorylation. The pyruvate dehydrogenase complex catalyzes the overall conversion of pyruvate to acetyl-CoA and CO(2), and thereby links the glycolytic pathway to the tricarboxylic cycle. The chain is Pyruvate dehydrogenase E1 component subunit alpha, somatic form, mitochondrial (PDHA1) from Bos taurus (Bovine).